Here is a 472-residue protein sequence, read N- to C-terminus: Cannabinoid receptor 1 (472 aa).

At 1–116 the chain is on the extracellular side; it reads MKSILDGLAD…CFMVLNPSQQ (116 aa). The tract at residues 2–23 is required for mitochondrial localization; that stretch reads KSILDGLADTTFRTITTDLLYV. N-linked (GlcNAc...) asparagine glycans are attached at residues asparagine 77 and asparagine 83. The helical transmembrane segment at 117–142 threads the bilayer; sequence LAIAVLSLTLGTFTVLENLLVLCVIL. Residues 143–154 are Cytoplasmic-facing; sequence HSRSLRCRPSYH. Residues 155-175 form a helical membrane-spanning segment; the sequence is FIGSLAVADLLGSVIFVYSFI. Residues 176–187 are Extracellular-facing; that stretch reads DFHVFHRKDSRN. A helical transmembrane segment spans residues 188–212; the sequence is VFLFKLGGVTASFTASVGSLFLTAI. The Cytoplasmic portion of the chain corresponds to 213-232; it reads DRYISIHRPLAYKRIVTRPK. Residues 233–255 form a helical membrane-spanning segment; the sequence is AVVAFCLMWTIAIVIAVLPLLGW. The Extracellular portion of the chain corresponds to 256-273; it reads NCEKLQSVCSDIFPHIDE. A helical membrane pass occupies residues 274–299; the sequence is TYLMFWIGVTSVLLLFIVYAYMYILW. Over 300-344 the chain is Cytoplasmic; the sequence is KAHSHAVRMIQRGTQKSIIIHTSEDGKVQVTRPDQARMDIRLAKT. Residues 345–365 form a helical membrane-spanning segment; the sequence is LVLILVVLIICWGPLLAIMVY. Topologically, residues 366–377 are extracellular; that stretch reads DVFGKMNKLIKT. Residues 378–399 form a helical membrane-spanning segment; that stretch reads VFAFCSMLCLLNSTVNPIIYAL. Over 400 to 472 the chain is Cytoplasmic; the sequence is RSKDLRHAFR…VSTDTSAEAL (73 aa). Cysteine 415 carries S-palmitoyl cysteine lipidation. Phosphoserine occurs at positions 425 and 429.

This sequence belongs to the G-protein coupled receptor 1 family. In terms of assembly, interacts (via C-terminus) with CNRIP1; this interaction attenuates constitutive, but not agonist-dependent, inhibition of voltage-gated Ca(2+) channels in neurons. Associates with G protein alpha subunits, including G(i) alpha-1/GNAI1, G(i) alpha-3/GNAI3 and G(o)-alpha/GNAO1; palmitoylation is important for interaction with GNAI3 and GNAO1. In terms of processing, palmitoylation at Cys-415 is important for recruitment at plasma membrane and lipid rafts and association with G protein alpha subunits. As to expression, widely expressed, with highest levels in fetal and adult brain. Expression levels of isoform 2 and isoform 3 are much lower than those of isoform 1.

It localises to the cell membrane. It is found in the membrane raft. The protein localises to the mitochondrion outer membrane. The protein resides in the cell projection. Its subcellular location is the axon. It localises to the presynapse. Its activity is regulated as follows. Hemopressin, a peptide derived from hemoglobin subunit alpha (HBA1 and/or HBA2), acts as an antagonist peptide: hemopressin-binding efficiently blocks cannabinoid receptor CNR1 and subsequent signaling. G-protein coupled receptor for endogenous cannabinoids (eCBs), including N-arachidonoylethanolamide (also called anandamide or AEA) and 2-arachidonoylglycerol (2-AG), as well as phytocannabinoids, such as delta(9)-tetrahydrocannabinol (THC). Mediates many cannabinoid-induced effects, acting, among others, on food intake, memory loss, gastrointestinal motility, catalepsy, ambulatory activity, anxiety, chronic pain. Signaling typically involves reduction in cyclic AMP. In the hypothalamus, may have a dual effect on mitochondrial respiration depending upon the agonist dose and possibly upon the cell type. Increases respiration at low doses, while decreases respiration at high doses. At high doses, CNR1 signal transduction involves G-protein alpha-i protein activation and subsequent inhibition of mitochondrial soluble adenylate cyclase, decrease in cyclic AMP concentration, inhibition of protein kinase A (PKA)-dependent phosphorylation of specific subunits of the mitochondrial electron transport system, including NDUFS2. In the hypothalamus, inhibits leptin-induced reactive oxygen species (ROS) formation and mediates cannabinoid-induced increase in SREBF1 and FASN gene expression. In response to cannabinoids, drives the release of orexigenic beta-endorphin, but not that of melanocyte-stimulating hormone alpha/alpha-MSH, from hypothalamic POMC neurons, hence promoting food intake. In the hippocampus, regulates cellular respiration and energy production in response to cannabinoids. Involved in cannabinoid-dependent depolarization-induced suppression of inhibition (DSI), a process in which depolarization of CA1 postsynaptic pyramidal neurons mobilizes eCBs, which retrogradely activate presynaptic CB1 receptors, transiently decreasing GABAergic inhibitory neurotransmission. Also reduces excitatory synaptic transmission. In superior cervical ganglions and cerebral vascular smooth muscle cells, inhibits voltage-gated Ca(2+) channels in a constitutive, as well as agonist-dependent manner. In cerebral vascular smooth muscle cells, cannabinoid-induced inhibition of voltage-gated Ca(2+) channels leads to vasodilation and decreased vascular tone. Induces leptin production in adipocytes and reduces LRP2-mediated leptin clearance in the kidney, hence participating in hyperleptinemia. In adipose tissue, CNR1 signaling leads to increased expression of SREBF1, ACACA and FASN genes. In the liver, activation by endocannabinoids leads to increased de novo lipogenesis and reduced fatty acid catabolism, associated with increased expression of SREBF1/SREBP-1, GCK, ACACA, ACACB and FASN genes. May also affect de novo cholesterol synthesis and HDL-cholesteryl ether uptake. Peripherally modulates energy metabolism. In high carbohydrate diet-induced obesity, may decrease the expression of mitochondrial dihydrolipoyl dehydrogenase/DLD in striated muscles, as well as that of selected glucose/ pyruvate metabolic enzymes, hence affecting energy expenditure through mitochondrial metabolism. In response to cannabinoid anandamide, elicits a pro-inflammatory response in macrophages, which involves NLRP3 inflammasome activation and IL1B and IL18 secretion. In macrophages infiltrating pancreatic islets, this process may participate in the progression of type-2 diabetes and associated loss of pancreatic beta-cells. In terms of biological role, binds both 2-arachidonoylglycerol (2-AG) and anandamide. Functionally, only binds 2-arachidonoylglycerol (2-AG) with high affinity. Contrary to its effect on isoform 1, 2-AG behaves as an inverse agonist on isoform 2 in assays measuring GTP binding to membranes. Its function is as follows. Only binds 2-arachidonoylglycerol (2-AG) with high affinity. Contrary to its effect on isoform 1, 2-AG behaves as an inverse agonist on isoform 3 in assays measuring GTP binding to membranes. This is Cannabinoid receptor 1 (CNR1) from Homo sapiens (Human).